The sequence spans 605 residues: Probable potassium transport system protein Kup 1 (605 aa).

The next 12 helical transmembrane spans lie at A16 to F36, V46 to A66, V97 to I117, G138 to V158, V166 to V186, G212 to L232, W248 to T268, L287 to I307, I339 to F359, A368 to F388, A397 to K417, and I418 to I438.

Belongs to the HAK/KUP transporter (TC 2.A.72) family.

Its subcellular location is the cell inner membrane. The enzyme catalyses K(+)(in) + H(+)(in) = K(+)(out) + H(+)(out). In terms of biological role, transport of potassium into the cell. Likely operates as a K(+):H(+) symporter. This Geobacter metallireducens (strain ATCC 53774 / DSM 7210 / GS-15) protein is Probable potassium transport system protein Kup 1.